We begin with the raw amino-acid sequence, 76 residues long: ATP synthase subunit c (76 aa).

Transmembrane regions (helical) follow at residues 12 to 32 (LGSI…GIIF) and 54 to 74 (ILGF…PFVY).

Belongs to the ATPase C chain family. As to quaternary structure, F-type ATPases have 2 components, F(1) - the catalytic core - and F(0) - the membrane proton channel. F(1) has five subunits: alpha(3), beta(3), gamma(1), delta(1), epsilon(1). F(0) has three main subunits: a(1), b(2) and c(10-14). The alpha and beta chains form an alternating ring which encloses part of the gamma chain. F(1) is attached to F(0) by a central stalk formed by the gamma and epsilon chains, while a peripheral stalk is formed by the delta and b chains.

It is found in the cell membrane. Functionally, f(1)F(0) ATP synthase produces ATP from ADP in the presence of a proton or sodium gradient. F-type ATPases consist of two structural domains, F(1) containing the extramembraneous catalytic core and F(0) containing the membrane proton channel, linked together by a central stalk and a peripheral stalk. During catalysis, ATP synthesis in the catalytic domain of F(1) is coupled via a rotary mechanism of the central stalk subunits to proton translocation. In terms of biological role, key component of the F(0) channel; it plays a direct role in translocation across the membrane. A homomeric c-ring of between 10-14 subunits forms the central stalk rotor element with the F(1) delta and epsilon subunits. This is ATP synthase subunit c from Streptomyces coelicolor (strain ATCC BAA-471 / A3(2) / M145).